Consider the following 689-residue polypeptide: FACT complex subunit ssrp1-B (689 aa).

Disordered regions lie at residues 434–565 and 592–689; these read DNKS…KRAT and KAGA…GESD. The span at 461 to 477 shows a compositional bias: acidic residues; the sequence is EQDDDSDDESTDEDYDL. Basic and acidic residues-rich tracts occupy residues 478–491, 523–532, 538–563, and 601–628; these read DKDMKKQKNDKDSS, IEPKKKESKE, EKKEKPVKEKAVKKGKKTKDPNEPKR, and SADDKKEWNDKAAQDKARYEAEMKEYKK. The segment at residues 561–627 is a DNA-binding region (HMG box); the sequence is PKRATTAYII…RYEAEMKEYK (67 aa). Over residues 638–650 the composition is skewed to polar residues; the sequence is GPSTKKSSDQSPG.

This sequence belongs to the SSRP1 family. As to quaternary structure, component of the FACT complex, a stable heterodimer of hmg-3 and spt-16. The FACT complex may also include hmg-4 instead of hmg-3. Expressed in the germline.

The protein resides in the nucleus. Its subcellular location is the chromosome. In terms of biological role, component of the FACT complex, a general chromatin factor that acts to reorganize nucleosomes. The FACT complex is involved in multiple processes that require DNA as a template such as mRNA elongation, DNA replication and DNA repair. During transcription elongation the FACT complex acts as a histone chaperone that both destabilizes and restores nucleosomal structure. It facilitates the passage of RNA polymerase II and transcription by promoting the dissociation of one histone H2A-H2B dimer from the nucleosome, then subsequently promotes the reestablishment of the nucleosome following the passage of RNA polymerase II. Binds specifically to double-stranded DNA. In embryos, may function redundantly with hmg-4 to promote cell cycle progression and development of the anterior pharynx. In the germline, acts non-redundantly with hmg-4 to play a role in oocyte development. This is FACT complex subunit ssrp1-B from Caenorhabditis elegans.